The following is a 307-amino-acid chain: Plastid division protein PDV2 (307 aa).

At M1 the chain carries N-acetylmethionine. The Cytoplasmic segment spans residues 1-213; it reads MEDEEGIGLI…SGGSSHGVIR (213 aa). The interval 28-66 is disordered; the sequence is SSTTVSDNGDGNEDLSPGEGRKSEIIGNQDKDFDSISSE. Residues 46–61 show a composition bias toward basic and acidic residues; sequence EGRKSEIIGNQDKDFD. At S50 the chain carries Phosphoserine. Residues 76 to 103 adopt a coiled-coil conformation; the sequence is LLRIRDALEALESQLASLQNLRQRQQYE. The disordered stretch occupies residues 174–206; it reads HLPSKKKSDANGFGSGHVRNEAEAKSPNGGSGG. The helical transmembrane segment at 214–234 threads the bilayer; the sequence is FLGSVAKIVLPIIGVISLLSA. The Chloroplast intermembrane portion of the chain corresponds to 235 to 307; the sequence is SGYGPEMRKR…AKRDVTYGYG (73 aa). The ARC6 binding stretch occupies residues 235–307; the sequence is SGYGPEMRKR…AKRDVTYGYG (73 aa).

Interacts (via C-terminus) with ARC6 (via C-terminus) in the chloroplast intermembrane space; this interaction induces ARC6 homodimerization and leads to the formation of a heterotetramer containing two ARC6 and two PDV2 subunits. Interacts with ARC5/DRP5B. Mostly expressed in young leaves.

The protein resides in the plastid. Its subcellular location is the chloroplast outer membrane. Component of the plastid division machinery consisting in a binary fission accomplished by the simultaneous constriction of the FtsZ ring on the stromal side of the inner envelope membrane, and the ARC5/DRP5B ring on the cytosolic side of the outer envelope membrane. Positive factor of chloroplast division required, with a dosage effect, to mediate the recruitment and dimerization of ARC5/DRP5B at the midplastid constriction site in the cytoplasm at plastid outer envelope membranes (OEMs). Prevents ARC5/DRP5B GTPase acrivity. Relays plastid division site position between stroma and outer surface via interactions with the cytoplasmic ARC5/DRP5B and the inner membrane ARC6 that recruits stromal FtsZ ring. Binding to phosphatidylinositol 4-phosphate (PI4P) modulates negatively chloroplast division. This is Plastid division protein PDV2 from Arabidopsis thaliana (Mouse-ear cress).